Here is a 98-residue protein sequence, read N- to C-terminus: NADH-ubiquinone oxidoreductase chain 4L (98 aa).

The next 3 helical transmembrane spans lie at 1–21, 26–46, and 59–79; these read MASI…GVLI, LMST…MMTL, and APLI…ALLV.

This sequence belongs to the complex I subunit 4L family. As to quaternary structure, core subunit of respiratory chain NADH dehydrogenase (Complex I) which is composed of 45 different subunits.

Its subcellular location is the mitochondrion inner membrane. It catalyses the reaction a ubiquinone + NADH + 5 H(+)(in) = a ubiquinol + NAD(+) + 4 H(+)(out). In terms of biological role, core subunit of the mitochondrial membrane respiratory chain NADH dehydrogenase (Complex I) which catalyzes electron transfer from NADH through the respiratory chain, using ubiquinone as an electron acceptor. Part of the enzyme membrane arm which is embedded in the lipid bilayer and involved in proton translocation. The polypeptide is NADH-ubiquinone oxidoreductase chain 4L (MT-ND4L) (Caenolestes fuliginosus (Shrew opossum)).